The chain runs to 117 residues: Anti-adapter protein IraM (117 aa).

The protein belongs to the IraM/RssC family.

The protein resides in the cytoplasm. Its function is as follows. Involved in the stabilization of the sigma stress factor RpoS. The sequence is that of Anti-adapter protein IraM from Klebsiella pneumoniae (strain 342).